The sequence spans 233 residues: Glucosamine-6-phosphate deaminase (233 aa).

The active-site Proton acceptor; for enolization step is D62. Residue N128 is the For ring-opening step of the active site. Residue H130 is the Proton acceptor; for ring-opening step of the active site. The For ring-opening step role is filled by E135.

Belongs to the glucosamine/galactosamine-6-phosphate isomerase family. NagB subfamily.

The enzyme catalyses alpha-D-glucosamine 6-phosphate + H2O = beta-D-fructose 6-phosphate + NH4(+). It participates in amino-sugar metabolism; N-acetylneuraminate degradation; D-fructose 6-phosphate from N-acetylneuraminate: step 5/5. Catalyzes the reversible isomerization-deamination of glucosamine 6-phosphate (GlcN6P) to form fructose 6-phosphate (Fru6P) and ammonium ion. The polypeptide is Glucosamine-6-phosphate deaminase (Streptococcus agalactiae serotype Ia (strain ATCC 27591 / A909 / CDC SS700)).